The primary structure comprises 94 residues: Large ribosomal subunit protein eL42 (94 aa).

C11, C14, C71, and C74 together coordinate Zn(2+). The segment at 11–74 (CPFCKKHTIH…LDLRFRCTEC (64 aa)) adopts a C4-type zinc-finger fold.

The protein belongs to the eukaryotic ribosomal protein eL42 family. In terms of assembly, part of the 50S ribosomal subunit. Zn(2+) is required as a cofactor.

Functionally, binds to the 23S rRNA. This Pyrococcus furiosus (strain ATCC 43587 / DSM 3638 / JCM 8422 / Vc1) protein is Large ribosomal subunit protein eL42.